The sequence spans 41 residues: Large ribosomal subunit protein bL36B (41 aa).

Belongs to the bacterial ribosomal protein bL36 family.

The protein is Large ribosomal subunit protein bL36B of Actinobacillus pleuropneumoniae serotype 5b (strain L20).